Here is a 1387-residue protein sequence, read N- to C-terminus: Kinesin-like protein KIF15-B (1387 aa).

The 339-residue stretch at 26 to 364 (AIKVFVRIRP…LQFAQRAKLI (339 aa)) folds into the Kinesin motor domain. 110–117 (GQTGSGKT) contacts ATP. Positions 369-1383 (VVNEDTQGNV…NLFLKETKKC (1015 aa)) form a coiled coil. The necessary for its targeting to microtubule minus ends stretch occupies residues 1138 to 1387 (NSPVVLAQTP…KETKKCEHCD (250 aa)).

This sequence belongs to the TRAFAC class myosin-kinesin ATPase superfamily. Kinesin family. KLP2 subfamily. As to quaternary structure, homodimer. Dimerization is required for targeting to microtubule minus ends. Found in a complex with tpx2 and microtubules. Its association with microtubules and targeting to microtubule minus ends requires tpx2. Strongly expressed in testis and weakly in lung (at protein level).

It is found in the cytoplasm. The protein localises to the cytoskeleton. The protein resides in the microtubule organizing center. It localises to the centrosome. Its subcellular location is the spindle. It is found in the spindle pole. Its function is as follows. Plus-end directed kinesin-like motor enzyme involved in mitotic spindle assembly. Required for centrosome separation and maintenance of spindle bipolarity during mitosis. The chain is Kinesin-like protein KIF15-B (kif15-b) from Xenopus laevis (African clawed frog).